A 49-amino-acid polypeptide reads, in one-letter code: Large ribosomal subunit protein bL33 (49 aa).

The protein belongs to the bacterial ribosomal protein bL33 family.

The polypeptide is Large ribosomal subunit protein bL33 (Heliobacterium modesticaldum (strain ATCC 51547 / Ice1)).